We begin with the raw amino-acid sequence, 252 residues long: Beta-crystallin B1 (252 aa).

Low complexity-rich tracts occupy residues M1–V15 and K24–T37. The interval M1 to T42 is disordered. The residue at position 2 (S2) is an N-acetylserine. Positions S2–N58 are N-terminal arm. Beta/gamma crystallin 'Greek key' domains follow at residues Y59–A98 and G99–K143. A connecting peptide region spans residues M144–E148. Beta/gamma crystallin 'Greek key' domains lie at H149–S190 and G191–R233. A C-terminal arm region spans residues K235 to K252.

It belongs to the beta/gamma-crystallin family. In terms of assembly, homo/heterodimer, or complexes of higher-order. The structure of beta-crystallin oligomers seems to be stabilized through interactions between the N-terminal arms. Specific cleavages in the N-terminal arm occur during lens maturation and give rise to truncated forms, leading to impaired oligomerization and protein insolubilization.

In terms of biological role, crystallins are the dominant structural components of the vertebrate eye lens. This Homo sapiens (Human) protein is Beta-crystallin B1 (CRYBB1).